We begin with the raw amino-acid sequence, 422 residues long: MEDSKPLTVSEVTRILKNLITGSKDLKNIWVRGEISNYSKASSGHIYFSLKDSSSLMRCTFFNYSNKNYSGKPLSDGKEVQVYGTVTLYEAGGSYNLNVARVEELGQGDILLQIEKLKQKLAAEGIFDPERKRRIPSFPKTLGIATSPSGAAIEDIIKIARSRFPGINILISPCFVQGDEAPDSIVAAIEELNHPSWGVDVIIAGRGGGSFEDLMAFNDEKVVRAYANSRIPIISAVGHQTDVLLSDFAADYSTPTPTAAAEYAVPKEEDVLQFLTQLEGRLKTSLLAKISSSKDRLRLLSGKFIFKEPMQLLNQRNQRVDEIGVRLQKAVFNKVGLARVRLERYEDLTSRMRNIFFHKKQKAEFWTTKVEDLSPPATMKRGYSILRNQKGKIIRSPEETKPEEELQVLLSGGTMQVIRKGK.

This sequence belongs to the XseA family. As to quaternary structure, heterooligomer composed of large and small subunits.

The protein localises to the cytoplasm. It catalyses the reaction Exonucleolytic cleavage in either 5'- to 3'- or 3'- to 5'-direction to yield nucleoside 5'-phosphates.. Its function is as follows. Bidirectionally degrades single-stranded DNA into large acid-insoluble oligonucleotides, which are then degraded further into small acid-soluble oligonucleotides. The polypeptide is Exodeoxyribonuclease 7 large subunit (Leptospira borgpetersenii serovar Hardjo-bovis (strain JB197)).